We begin with the raw amino-acid sequence, 950 residues long: 2-oxoglutarate dehydrogenase E1 component (950 aa).

Belongs to the alpha-ketoglutarate dehydrogenase family. As to quaternary structure, homodimer. Part of the 2-oxoglutarate dehydrogenase (OGDH) complex composed of E1 (2-oxoglutarate dehydrogenase), E2 (dihydrolipoamide succinyltransferase) and E3 (dihydrolipoamide dehydrogenase); the complex contains multiple copies of the three enzymatic components (E1, E2 and E3). It depends on thiamine diphosphate as a cofactor.

The enzyme catalyses N(6)-[(R)-lipoyl]-L-lysyl-[protein] + 2-oxoglutarate + H(+) = N(6)-[(R)-S(8)-succinyldihydrolipoyl]-L-lysyl-[protein] + CO2. Functionally, E1 component of the 2-oxoglutarate dehydrogenase (OGDH) complex which catalyzes the decarboxylation of 2-oxoglutarate, the first step in the conversion of 2-oxoglutarate to succinyl-CoA and CO(2). This is 2-oxoglutarate dehydrogenase E1 component from Geobacillus kaustophilus (strain HTA426).